The following is a 460-amino-acid chain: MLO-like protein 9 (460 aa).

At 1–21 (MAGGGGGGGGEGPRQLDQTPT) the chain is on the extracellular side. A helical membrane pass occupies residues 22–42 (WAVSTVCGVIILISIILELII). Over 43–67 (HKVGEVFERKKKKALFEALEKIKNE) the chain is Cytoplasmic. Residues 68 to 88 (LMVLGFISLLLTFGQNYIASI) form a helical membrane-spanning segment. Topologically, residues 89–158 (CVPSRYGHAM…ISLNALHQVH (70 aa)) are extracellular. Residues 159 to 179 (IFIFFLAVFHVIYSAITMMLG) traverse the membrane as a helical segment. Topologically, residues 180-289 (RAKIRGWKVW…KVVVGIRPEL (110 aa)) are cytoplasmic. The helical transmembrane segment at 290–310 (WAFVMLFLLFDVHGWYVTAVI) threads the bilayer. Residues 311–315 (TMIPP) are Extracellular-facing. A helical transmembrane segment spans residues 316-336 (LLTLAIGTKLQAIISYMALEI). At 337 to 366 (QERHAVIQGMPVVNVSDQHFWFEKPDLVLH) the chain is on the cytoplasmic side. Residues 367-387 (MIHFVLFQNAFEITYFFWIWY) traverse the membrane as a helical segment. The Extracellular segment spans residues 388 to 398 (EFGLRSCFHHH). The helical transmembrane segment at 399–419 (FGLIIIRVCLGVGVQFLCSYI) threads the bilayer. Over 420–460 (TLPLYALVTQMGSTMKRSVFDEQTSKALEQWHKKARKKNEK) the chain is Cytoplasmic. The calmodulin-binding stretch occupies residues 441–460 (EQTSKALEQWHKKARKKNEK).

It belongs to the MLO family.

The protein resides in the membrane. May be involved in modulation of pathogen defense and leaf cell death. Activity seems to be regulated by Ca(2+)-dependent calmodulin binding and seems not to require heterotrimeric G proteins. This chain is MLO-like protein 9 (MLO9), found in Arabidopsis thaliana (Mouse-ear cress).